A 202-amino-acid polypeptide reads, in one-letter code: MGGPELEQLIALLARLPGLGPRSARRAALRLLQQPETRLLPLAAAMQNAARAVKTCRVCGNLDSADPCSVCTDPSRENGLICVVESVGDLWAMDRAGIYRGLYHVLGGVLSALAGTGPDALNWPALMRRIESSRPSATPVTEVILALGATVDGATTAHWLAEQLRPMGVSVTRLAQGIPIGGALDVLDDGTLAAAMRARRSA.

A C4-type zinc finger spans residues 56-71; sequence CRVCGNLDSADPCSVC. The 101-residue stretch at 79-179 folds into the Toprim domain; it reads GLICVVESVG…SVTRLAQGIP (101 aa).

This sequence belongs to the RecR family.

Functionally, may play a role in DNA repair. It seems to be involved in an RecBC-independent recombinational process of DNA repair. It may act with RecF and RecO. This Granulibacter bethesdensis (strain ATCC BAA-1260 / CGDNIH1) protein is Recombination protein RecR.